Reading from the N-terminus, the 31-residue chain is Kappa-theraphotoxin-Ps1b (31 aa).

3 disulfide bridges follow: cysteine 2-cysteine 16, cysteine 9-cysteine 21, and cysteine 15-cysteine 25. The residue at position 31 (methionine 31) is a Methionine amide.

It belongs to the neurotoxin 30 (phrixotoxin) family. In terms of tissue distribution, expressed by the venom gland.

It localises to the secreted. In terms of biological role, potent and specific blocker of Kv4.2/KCND2 (IC(50)=34 nM) and Kv4.3/KCND3 (IC(50)=71 nM) potassium channels. Acts by altering the gating properties of these channels. This is Kappa-theraphotoxin-Ps1b from Paraphysa scrofa (Chilean copper tarantula).